Reading from the N-terminus, the 123-residue chain is rRNA-processing protein cgr-1 (123 aa).

Positions Met1–Gln13 are enriched in low complexity. Disordered stretches follow at residues Met1 to Ser47 and Glu85 to Ser123. The stretch at Glu49 to Arg110 forms a coiled coil. Basic and acidic residues predominate over residues Glu85 to Lys102. Residues Met103–Ser123 show a composition bias toward basic residues.

Belongs to the CGR1 family.

It is found in the nucleus. The protein resides in the nucleolus. Functionally, involved in nucleolar integrity and required for processing of the pre-rRNA for the 60S ribosome subunit. This is rRNA-processing protein cgr-1 (cgr-1) from Neurospora crassa (strain ATCC 24698 / 74-OR23-1A / CBS 708.71 / DSM 1257 / FGSC 987).